We begin with the raw amino-acid sequence, 198 residues long: Protein GrpE (198 aa).

This sequence belongs to the GrpE family. In terms of assembly, homodimer.

The protein localises to the cytoplasm. Functionally, participates actively in the response to hyperosmotic and heat shock by preventing the aggregation of stress-denatured proteins, in association with DnaK and GrpE. It is the nucleotide exchange factor for DnaK and may function as a thermosensor. Unfolded proteins bind initially to DnaJ; upon interaction with the DnaJ-bound protein, DnaK hydrolyzes its bound ATP, resulting in the formation of a stable complex. GrpE releases ADP from DnaK; ATP binding to DnaK triggers the release of the substrate protein, thus completing the reaction cycle. Several rounds of ATP-dependent interactions between DnaJ, DnaK and GrpE are required for fully efficient folding. The chain is Protein GrpE from Lysinibacillus sphaericus (Bacillus sphaericus).